The primary structure comprises 429 residues: Phosphomethylpyrimidine synthase 1 (429 aa).

Substrate-binding positions include Asn-65, Met-94, Tyr-123, His-162, 184–186, 225–228, and Glu-264; these read SRG and DGLR. His-268 provides a ligand contact to Zn(2+). Tyr-291 contacts substrate. Residue His-332 coordinates Zn(2+). [4Fe-4S] cluster contacts are provided by Cys-408, Cys-411, and Cys-415.

This sequence belongs to the ThiC family. [4Fe-4S] cluster serves as cofactor.

The catalysed reaction is 5-amino-1-(5-phospho-beta-D-ribosyl)imidazole + S-adenosyl-L-methionine = 4-amino-2-methyl-5-(phosphooxymethyl)pyrimidine + CO + 5'-deoxyadenosine + formate + L-methionine + 3 H(+). It participates in cofactor biosynthesis; thiamine diphosphate biosynthesis. Its function is as follows. Catalyzes the synthesis of the hydroxymethylpyrimidine phosphate (HMP-P) moiety of thiamine from aminoimidazole ribotide (AIR) in a radical S-adenosyl-L-methionine (SAM)-dependent reaction. The sequence is that of Phosphomethylpyrimidine synthase 1 from Methanosphaera stadtmanae (strain ATCC 43021 / DSM 3091 / JCM 11832 / MCB-3).